The primary structure comprises 195 residues: Endoribonuclease YbeY (195 aa).

3 residues coordinate Zn(2+): His-152, His-156, and His-162.

It belongs to the endoribonuclease YbeY family. It depends on Zn(2+) as a cofactor.

The protein localises to the cytoplasm. Its function is as follows. Single strand-specific metallo-endoribonuclease involved in late-stage 70S ribosome quality control and in maturation of the 3' terminus of the 16S rRNA. The sequence is that of Endoribonuclease YbeY from Rhodopseudomonas palustris (strain HaA2).